A 596-amino-acid chain; its full sequence is NADH-quinone oxidoreductase subunit C/D (596 aa).

The tract at residues 1 to 186 (MTDLTAQDAA…DPFELTKAKQ (186 aa)) is NADH dehydrogenase I subunit C. Positions 210–596 (DFMFLNLGPN…IDFVMSDVDR (387 aa)) are NADH dehydrogenase I subunit D.

This sequence in the N-terminal section; belongs to the complex I 30 kDa subunit family. In the C-terminal section; belongs to the complex I 49 kDa subunit family. As to quaternary structure, NDH-1 is composed of 13 different subunits. Subunits NuoB, CD, E, F, and G constitute the peripheral sector of the complex.

The protein resides in the cell inner membrane. The catalysed reaction is a quinone + NADH + 5 H(+)(in) = a quinol + NAD(+) + 4 H(+)(out). Its function is as follows. NDH-1 shuttles electrons from NADH, via FMN and iron-sulfur (Fe-S) centers, to quinones in the respiratory chain. The immediate electron acceptor for the enzyme in this species is believed to be ubiquinone. Couples the redox reaction to proton translocation (for every two electrons transferred, four hydrogen ions are translocated across the cytoplasmic membrane), and thus conserves the redox energy in a proton gradient. This chain is NADH-quinone oxidoreductase subunit C/D, found in Salmonella choleraesuis (strain SC-B67).